A 299-amino-acid polypeptide reads, in one-letter code: MTESTTSSPHDAVFKTFMFTPETARDFLEIHLPEPLRKLCNLQTLRLEPTSFIEKSLRAYYSDVLWSVETSDGDGYIYCVIEHQSSAEKNMAFRLMRYATAAMQRHQDKGYDRVPLVVPLLFYHGETSPYPYSLNWLDEFDDPQLARQLYTEAFLLVDITIVPDDEIMQHRRIALLELIQKHIRDRDLIGMVDRITTLLVRGFTNDSQLQTLFNYLLQCGDTSRFTRFIEEIAERSPLQKERLMTIAERLRQEGHQIGWQEGMHEQAIKIALRMLEQGFEREIVLATTQLTDADIPNCH.

This sequence belongs to the Rpn/YhgA-like nuclease family.

Upon expression has no effect on RecA-independent DNA recombination, cell viability or DNA damage. The sequence is that of Inactive recombination-promoting nuclease-like protein RpnE (yfaD) from Escherichia coli (strain K12).